A 168-amino-acid polypeptide reads, in one-letter code: SsrA-binding protein (168 aa).

It belongs to the SmpB family.

The protein resides in the cytoplasm. Its function is as follows. Required for rescue of stalled ribosomes mediated by trans-translation. Binds to transfer-messenger RNA (tmRNA), required for stable association of tmRNA with ribosomes. tmRNA and SmpB together mimic tRNA shape, replacing the anticodon stem-loop with SmpB. tmRNA is encoded by the ssrA gene; the 2 termini fold to resemble tRNA(Ala) and it encodes a 'tag peptide', a short internal open reading frame. During trans-translation Ala-aminoacylated tmRNA acts like a tRNA, entering the A-site of stalled ribosomes, displacing the stalled mRNA. The ribosome then switches to translate the ORF on the tmRNA; the nascent peptide is terminated with the 'tag peptide' encoded by the tmRNA and targeted for degradation. The ribosome is freed to recommence translation, which seems to be the essential function of trans-translation. In Mycobacterium sp. (strain JLS), this protein is SsrA-binding protein.